The following is a 98-amino-acid chain: MTKSELIERIAERQDQLSAKDIELAVKLVLEYMSQALSTGERIEIRGFGSFSLHFRAPRTGRNPKTGESVTLPGKYVPHFKPGKEMRDRVNESIQSEG.

The segment at 59-98 (RTGRNPKTGESVTLPGKYVPHFKPGKEMRDRVNESIQSEG) is disordered. The span at 82–91 (PGKEMRDRVN) shows a compositional bias: basic and acidic residues.

The protein belongs to the bacterial histone-like protein family. As to quaternary structure, heterodimer of an alpha and a beta chain.

Functionally, this protein is one of the two subunits of integration host factor, a specific DNA-binding protein that functions in genetic recombination as well as in transcriptional and translational control. This is Integration host factor subunit beta from Saccharophagus degradans (strain 2-40 / ATCC 43961 / DSM 17024).